Here is a 109-residue protein sequence, read N- to C-terminus: Cytochrome c6 (109 aa).

Residues 1 to 25 (MFKNIIIVVAVTLCALFTNEHVVYS) form the signal peptide. Residues Cys39, Cys42, His43, and Met83 each contribute to the heme c site.

It belongs to the cytochrome c family. PetJ subfamily. As to quaternary structure, monomer. Binds 1 heme c group covalently per subunit.

The protein localises to the plastid. The protein resides in the chloroplast thylakoid lumen. Functionally, functions as an electron carrier between membrane-bound cytochrome b6-f and photosystem I in oxygenic photosynthesis. This chain is Cytochrome c6 (petJ), found in Cyanidium caldarium (Red alga).